The sequence spans 252 residues: Lipoprotein PrgK (252 aa).

The first 17 residues, 1 to 17 (MIRRYLYTFLLVMTLAG), serve as a signal peptide directing secretion. Residue C18 is the site of N-palmitoyl cysteine attachment. A lipid anchor (S-diacylglycerol cysteine) is attached at C18. The helical transmembrane segment at 207 to 227 (FATSWIVLIILLSVMSAGFGV) threads the bilayer.

This sequence belongs to the YscJ lipoprotein family.

The protein resides in the cell outer membrane. Its function is as follows. Required for invasion of epithelial cells. Could be involved in protein secretion. The sequence is that of Lipoprotein PrgK (prgK) from Salmonella typhimurium (strain LT2 / SGSC1412 / ATCC 700720).